The primary structure comprises 139 residues: Hydrogenase maturation factor HypA (139 aa).

His-2 provides a ligand contact to Ni(2+). Positions 73, 76, 110, and 113 each coordinate Zn(2+).

The protein belongs to the HypA/HybF family.

Involved in the maturation of [NiFe] hydrogenases. Required for nickel insertion into the metal center of the hydrogenase. In Pyrococcus furiosus (strain ATCC 43587 / DSM 3638 / JCM 8422 / Vc1), this protein is Hydrogenase maturation factor HypA.